Here is a 155-residue protein sequence, read N- to C-terminus: Small ribosomal subunit protein uS7cz/uS7cy (155 aa).

The protein belongs to the universal ribosomal protein uS7 family. In terms of assembly, part of the 30S ribosomal subunit.

It localises to the plastid. The protein resides in the chloroplast. One of the primary rRNA binding proteins, it binds directly to 16S rRNA where it nucleates assembly of the head domain of the 30S subunit. The protein is Small ribosomal subunit protein uS7cz/uS7cy (rps7-A) of Nymphaea alba (White water-lily).